We begin with the raw amino-acid sequence, 835 residues long: Leucine--tRNA ligase (835 aa).

A 'HIGH' region motif is present at residues Pro-36–His-46. The 'KMSKS' region signature appears at Lys-602 to Ser-606. Lys-605 is an ATP binding site.

This sequence belongs to the class-I aminoacyl-tRNA synthetase family.

The protein localises to the cytoplasm. The catalysed reaction is tRNA(Leu) + L-leucine + ATP = L-leucyl-tRNA(Leu) + AMP + diphosphate. In Rickettsia felis (strain ATCC VR-1525 / URRWXCal2) (Rickettsia azadi), this protein is Leucine--tRNA ligase.